A 420-amino-acid polypeptide reads, in one-letter code: Tryptophan--tRNA ligase (420 aa).

A 'HIGH' region motif is present at residues 72 to 80 (PSGLPHFGH). Residues 308–312 (KMSSS) carry the 'KMSKS' region motif.

It belongs to the class-I aminoacyl-tRNA synthetase family.

The protein localises to the cytoplasm. The catalysed reaction is tRNA(Trp) + L-tryptophan + ATP = L-tryptophyl-tRNA(Trp) + AMP + diphosphate + H(+). This chain is Tryptophan--tRNA ligase, found in Archaeoglobus fulgidus (strain ATCC 49558 / DSM 4304 / JCM 9628 / NBRC 100126 / VC-16).